We begin with the raw amino-acid sequence, 417 residues long: Serine hydroxymethyltransferase (417 aa).

(6S)-5,6,7,8-tetrahydrofolate contacts are provided by residues leucine 121 and glycine 125–leucine 127. Residue lysine 229 is modified to N6-(pyridoxal phosphate)lysine. Serine 355–phenylalanine 357 lines the (6S)-5,6,7,8-tetrahydrofolate pocket.

This sequence belongs to the SHMT family. Homodimer. Pyridoxal 5'-phosphate serves as cofactor.

It localises to the cytoplasm. It catalyses the reaction (6R)-5,10-methylene-5,6,7,8-tetrahydrofolate + glycine + H2O = (6S)-5,6,7,8-tetrahydrofolate + L-serine. Its pathway is one-carbon metabolism; tetrahydrofolate interconversion. It participates in amino-acid biosynthesis; glycine biosynthesis; glycine from L-serine: step 1/1. In terms of biological role, catalyzes the reversible interconversion of serine and glycine with tetrahydrofolate (THF) serving as the one-carbon carrier. This reaction serves as the major source of one-carbon groups required for the biosynthesis of purines, thymidylate, methionine, and other important biomolecules. Also exhibits THF-independent aldolase activity toward beta-hydroxyamino acids, producing glycine and aldehydes, via a retro-aldol mechanism. In Shewanella baltica (strain OS155 / ATCC BAA-1091), this protein is Serine hydroxymethyltransferase.